Here is a 256-residue protein sequence, read N- to C-terminus: Imidazole glycerol phosphate synthase subunit hisF1 (256 aa).

Active-site residues include Asp-12 and Asp-131.

This sequence belongs to the HisA/HisF family. As to quaternary structure, heterodimer of HisH and HisF.

The protein localises to the cytoplasm. The catalysed reaction is 5-[(5-phospho-1-deoxy-D-ribulos-1-ylimino)methylamino]-1-(5-phospho-beta-D-ribosyl)imidazole-4-carboxamide + L-glutamine = D-erythro-1-(imidazol-4-yl)glycerol 3-phosphate + 5-amino-1-(5-phospho-beta-D-ribosyl)imidazole-4-carboxamide + L-glutamate + H(+). It functions in the pathway amino-acid biosynthesis; L-histidine biosynthesis; L-histidine from 5-phospho-alpha-D-ribose 1-diphosphate: step 5/9. Its function is as follows. IGPS catalyzes the conversion of PRFAR and glutamine to IGP, AICAR and glutamate. The HisF subunit catalyzes the cyclization activity that produces IGP and AICAR from PRFAR using the ammonia provided by the HisH subunit. The chain is Imidazole glycerol phosphate synthase subunit hisF1 (hisF1) from Pseudomonas aeruginosa (strain ATCC 15692 / DSM 22644 / CIP 104116 / JCM 14847 / LMG 12228 / 1C / PRS 101 / PAO1).